The following is a 101-amino-acid chain: Small ribosomal subunit protein uS14 (101 aa).

It belongs to the universal ribosomal protein uS14 family. Part of the 30S ribosomal subunit. Contacts proteins S3 and S10.

Functionally, binds 16S rRNA, required for the assembly of 30S particles and may also be responsible for determining the conformation of the 16S rRNA at the A site. The polypeptide is Small ribosomal subunit protein uS14 (Vibrio campbellii (strain ATCC BAA-1116)).